The primary structure comprises 672 residues: Cytadherence high molecular weight protein 3 (672 aa).

25 repeat units span residues 98–100 (YDQ), 106–108 (YDQ), 160–162 (PVV), 197–199 (YDQ), 206–208 (YDQ), 211–213 (YDQ), 221–223 (YDQ), 226–228 (YDQ), 235–237 (YDQ), 249–251 (YDQ), 288–290 (PVV), 310–319 (VEPTPTPVVE), 312–315 (PTPT), 316–318 (PVV), 322–324 (PVV), 330–339 (VEPTPTPVVE), 332–335 (PTPT), 336–338 (PVV), 354–358 (PQPTP), 385–389 (PTPVP), 396–400 (PQPTP), 402–404 (PVV), 413–415 (PVV), 424–428 (PTPAP), and 454–456 (PVV). The segment at 98–251 (YDQVNNTFYD…NAYNTQNYDQ (154 aa)) is 9 X 3 AA repeats OF Y-D-Q. Residues 160–456 (PVVDPDATPE…QTTPAVPPVV (297 aa)) are 8 X 3 AA repeats of P-V-V. Positions 177–197 (GLDPLPQAPDEYQDTTAPPAY) are disordered. Residues 310-339 (VEPTPTPVVETAPVVEAPKVVEPTPTPVVE) are 2 X 10 AA repeats of V-E-P-T-P-T-P-V-V-E. The tract at residues 312-428 (PTPTPVVETA…PKVVTPTPAP (117 aa)) is 6 X 5 AA repeats of P-X-P-X-P.

It localises to the cell projection. The protein resides in the attachment organelle membrane. Functionally, component of the cytoskeleton-like structure which stabilizes the shape of the wall-less mycoplasma. This cytoskeleton-like network of accessory proteins containing HMW proteins 1 to 5 allows the proper anchoring of cytadhesin proteins in the mycoplasmal membrane at the attachment organelle. Essential for successful surface parasitism. This Mycoplasma pneumoniae (strain ATCC 29342 / M129 / Subtype 1) (Mycoplasmoides pneumoniae) protein is Cytadherence high molecular weight protein 3 (hmw3).